The following is a 716-amino-acid chain: Exocyst complex component 8 (716 aa).

At S15 the chain carries Phosphoserine. The disordered stretch occupies residues 129–150 (GFLPGPAGVPREGSGTGEEGKQ). The region spanning 173 to 273 (YLVYNGDLVE…WLEVLEETKR (101 aa)) is the PH domain. The segment covering 275–284 (LSDKRRREQE) has biased composition (basic and acidic residues). The segment at 275-319 (LSDKRRREQEEAAAPRAPPPVTSKGSNPFEDEDDEELATPEAEEE) is disordered. A compositionally biased stretch (acidic residues) spans 303 to 319 (FEDEDDEELATPEAEEE). Phosphothreonine is present on T313.

This sequence belongs to the EXO84 family. As to quaternary structure, the exocyst complex is composed of EXOC1, EXOC2, EXOC3, EXOC4, EXOC5, EXOC6, EXOC7 and EXOC8. Interacts (via PH domain) with GTP-bound RALA and RALB. Interacts with SH3BP1; required for the localization of both SH3BP1 and the exocyst to the leading edge of migrating cells.

The protein resides in the cytoplasm. Its subcellular location is the perinuclear region. The protein localises to the cell projection. It localises to the growth cone. Component of the exocyst complex involved in the docking of exocytic vesicles with fusion sites on the plasma membrane. The polypeptide is Exocyst complex component 8 (Exoc8) (Mus musculus (Mouse)).